A 162-amino-acid chain; its full sequence is Caveolin-2 (162 aa).

The Cytoplasmic segment spans residues 1–86; it reads MGLETEKADV…FEISKYVMYK (86 aa). Tyrosine 19 is subject to Phosphotyrosine; by SRC. Residues serine 20 and serine 23 each carry the phosphoserine modification. Tyrosine 27 is subject to Phosphotyrosine; by SRC. Position 36 is a phosphoserine (serine 36). The segment at residues 87–107 is an intramembrane region (helical); it reads FLTVFLSIPLAFLAGILFATL. Residues 108–162 are Cytoplasmic-facing; it reads SCLHIWIIMPFVKTCLMVLPSVQTIWKSVTDAIIAPLCTSIGRSFSSVSLQLSHD.

Belongs to the caveolin family. In terms of assembly, monomer or homodimer. Interacts with CAV1; the interaction forms a stable heterooligomeric complex that is required for targeting to lipid rafts and for caveolae formation. Tyrosine phosphorylated forms do not form heterooligomers with the Tyr-19-phosphorylated form existing as a monomer or dimer, and the Tyr-27-form as a monomer only. Interacts (tyrosine phosphorylated form) with the SH2 domain-containing proteins, RASA1, NCK1 and SRC. Interacts (tyrosine phosphorylated form) with INSR, the interaction (Tyr-27-phosphorylated form) is increased on insulin stimulation. Interacts (Tyr-19 phosphorylated form) with MAPK1 (phosphorylated form); the interaction, promoted by insulin, leads to nuclear location and MAPK1 activation. Interacts with STAT3; the interaction is increased on insulin-induced tyrosine phosphorylation leading to STAT activation. In terms of processing, phosphorylated on serine and tyrosine residues. CAV1 promotes phosphorylation on Ser-23 which then targets the complex to the plasma membrane, lipid rafts and caveolae. Phosphorylation on Ser-36 appears to modulate mitosis in endothelial cells. Phosphorylation on both Tyr-19 and Tyr-27 is required for insulin-induced 'Ser-727' phosphorylation of STAT3 and its activation. Phosphorylation on Tyr-19 is required for insulin-induced phosphorylation of MAPK1 and DNA binding of STAT3. Tyrosine phosphorylation is induced by both EGF and insulin (By. similarity).

It localises to the nucleus. The protein resides in the cytoplasm. The protein localises to the golgi apparatus membrane. Its subcellular location is the cell membrane. It is found in the membrane. It localises to the caveola. May act as a scaffolding protein within caveolar membranes. Interacts directly with G-protein alpha subunits and can functionally regulate their activity. Acts as an accessory protein in conjunction with CAV1 in targeting to lipid rafts and driving caveolae formation. The Ser-36 phosphorylated form has a role in modulating mitosis in endothelial cells. Positive regulator of cellular mitogenesis of the MAPK signaling pathway. Required for the insulin-stimulated nuclear translocation and activation of MAPK1 and STAT3, and the subsequent regulation of cell cycle progression. In Saimiri boliviensis boliviensis (Bolivian squirrel monkey), this protein is Caveolin-2 (CAV2).